Reading from the N-terminus, the 581-residue chain is Protein phosphatase 2C 70 (581 aa).

The Extracellular segment spans residues 1-7 (MAMIGMN). The chain crosses the membrane as a helical span at residues 8-28 (IIGLFMVLMLLLISLIILFAC). The Cytoplasmic segment spans residues 29–581 (KPWRYFSRFR…IIYLDFDTSL (553 aa)). An FHA domain is found at 208-259 (VKLGRVSPSDLALKDSEVSGKHAQITWNSTKFKWELVDMGSLNGTLVNSHSI). The PPM-type phosphatase domain maps to 304–577 (KIGVASDPMA…DNTSIIYLDF (274 aa)). 4 residues coordinate Mn(2+): aspartate 346, glycine 347, aspartate 521, and aspartate 568.

In terms of assembly, association of RLK5 with kapp domain is dependent on phosphorylation of RLK5 and can be abolished by dephosphorylation. Interacts with SERK1 and CDC48A. Component of the SERK1 signaling complex, composed of KAPP, CDC48A, GRF6 or GRF7, SERK1, SERK2, SERK3/BAK1 and BRI1. Interacts with CLV1. The cofactor is Mg(2+). Mn(2+) is required as a cofactor. In terms of tissue distribution, expressed in all tissues examined.

The protein resides in the cell membrane. It catalyses the reaction O-phospho-L-seryl-[protein] + H2O = L-seryl-[protein] + phosphate. It carries out the reaction O-phospho-L-threonyl-[protein] + H2O = L-threonyl-[protein] + phosphate. In terms of biological role, dephosphorylates the Ser/Thr receptor-like kinase RLK5. May function as a signaling component in a pathway involving RLK5. Binds and dephosphorylates CLAVATA1 (CLV1). Functions as a negative regulator of the CLV1 signaling in plant development. Dephosphorylates SERK1 receptor kinase on threonine residues in the A-loop. Dephosphorylation of SERK1 controls SERK1 internalization. Component of a signaling pathway which mediates adaptation to NaCl stress. Is not a component of the SALT OVERLY SENSITIVE (SOS) pathway. The chain is Protein phosphatase 2C 70 from Arabidopsis thaliana (Mouse-ear cress).